The sequence spans 147 residues: Formiminotransferase N-terminal subdomain-containing protein (147 aa).

Positions 1-20 are cleaved as a signal peptide; it reads MSSSRVGLRLAACLLNVSEA.

The protein belongs to the formiminotransferase family. In terms of tissue distribution, widely expressed with highest levels in liver and skeletal muscle, and moderate levels in kidney, bone and pancreas.

This is Formiminotransferase N-terminal subdomain-containing protein (FTCDNL1) from Homo sapiens (Human).